The following is a 320-amino-acid chain: Transaldolase (320 aa).

Catalysis depends on Lys-135, which acts as the Schiff-base intermediate with substrate.

This sequence belongs to the transaldolase family. Type 1 subfamily. In terms of assembly, homodimer.

Its subcellular location is the cytoplasm. It catalyses the reaction D-sedoheptulose 7-phosphate + D-glyceraldehyde 3-phosphate = D-erythrose 4-phosphate + beta-D-fructose 6-phosphate. The protein operates within carbohydrate degradation; pentose phosphate pathway; D-glyceraldehyde 3-phosphate and beta-D-fructose 6-phosphate from D-ribose 5-phosphate and D-xylulose 5-phosphate (non-oxidative stage): step 2/3. Its function is as follows. Transaldolase is important for the balance of metabolites in the pentose-phosphate pathway. The polypeptide is Transaldolase (Colwellia psychrerythraea (strain 34H / ATCC BAA-681) (Vibrio psychroerythus)).